A 402-amino-acid chain; its full sequence is Propionate kinase (402 aa).

ATP is bound by residues N11 and K18. N11 is a Mg(2+) binding site. Residue R86 coordinates substrate. D143 acts as the Proton donor/acceptor in catalysis. ATP is bound by residues H175, 203–207 (HLGNG), 278–280 (DLR), and 326–330 (GIGEN).

Belongs to the acetokinase family. TdcD subfamily. As to quaternary structure, homodimer. Mg(2+) serves as cofactor.

The enzyme catalyses propanoate + ATP = propanoyl phosphate + ADP. The protein operates within amino-acid degradation; L-threonine degradation via propanoate pathway; propanoate from L-threonine: step 4/4. In terms of biological role, catalyzes the conversion of propionyl phosphate and ADP to propionate and ATP. The protein is Propionate kinase of Enterobacter sp. (strain 638).